Consider the following 207-residue polypeptide: LexA repressor (207 aa).

The H-T-H motif DNA-binding region spans 28–48 (RAEIARRLGFKSPNAAEEHLK). Active-site for autocatalytic cleavage activity residues include Ser-126 and Lys-163.

This sequence belongs to the peptidase S24 family. As to quaternary structure, homodimer.

The enzyme catalyses Hydrolysis of Ala-|-Gly bond in repressor LexA.. Represses a number of genes involved in the response to DNA damage (SOS response), including recA and lexA. In the presence of single-stranded DNA, RecA interacts with LexA causing an autocatalytic cleavage which disrupts the DNA-binding part of LexA, leading to derepression of the SOS regulon and eventually DNA repair. This Marinomonas sp. (strain MWYL1) protein is LexA repressor.